Here is a 274-residue protein sequence, read N- to C-terminus: NAD kinase (274 aa).

Asp59 functions as the Proton acceptor in the catalytic mechanism. Residues 59–60 (DG), 133–134 (ND), Arg144, Asp163, 174–179 (TAYALS), and Gln233 contribute to the NAD(+) site.

It belongs to the NAD kinase family. It depends on a divalent metal cation as a cofactor.

The protein resides in the cytoplasm. It carries out the reaction NAD(+) + ATP = ADP + NADP(+) + H(+). In terms of biological role, involved in the regulation of the intracellular balance of NAD and NADP, and is a key enzyme in the biosynthesis of NADP. Catalyzes specifically the phosphorylation on 2'-hydroxyl of the adenosine moiety of NAD to yield NADP. The chain is NAD kinase from Aquifex aeolicus (strain VF5).